Consider the following 291-residue polypeptide: ATP synthase gamma chain (291 aa).

This sequence belongs to the ATPase gamma chain family. In terms of assembly, F-type ATPases have 2 components, CF(1) - the catalytic core - and CF(0) - the membrane proton channel. CF(1) has five subunits: alpha(3), beta(3), gamma(1), delta(1), epsilon(1). CF(0) has three main subunits: a, b and c.

Its subcellular location is the cell inner membrane. Functionally, produces ATP from ADP in the presence of a proton gradient across the membrane. The gamma chain is believed to be important in regulating ATPase activity and the flow of protons through the CF(0) complex. This chain is ATP synthase gamma chain, found in Rhodopseudomonas palustris (strain ATCC BAA-98 / CGA009).